We begin with the raw amino-acid sequence, 480 residues long: Oxysterol-binding protein-related protein 2 (480 aa).

A disordered region spans residues 1-60 (MNGEEEFFDAVTGFDSDNSSGEFSEANQKVTGMIDLDTSKNNRIGKTGERPSQENGIQKH). Residues 15-30 (DSDNSSGEFSEANQKV) show a composition bias toward polar residues. 2 positions are modified to phosphoserine: S19 and S20. A 1,2-diacyl-sn-glycero-3-phospho-(1D-myo-inositol-4,5-bisphosphate) contacts are provided by residues K90, 178-179 (HH), and 427-431 (EEKQR).

It belongs to the OSBP family. As to quaternary structure, monomer. Homotetramer; phosphatidylinositol-4,5-bisphosphate binding promotes formation of stable tetramers. Interacts with DIAPH1. Widely expressed.

It is found in the cytoplasm. Its subcellular location is the cytosol. The protein localises to the lipid droplet. The protein resides in the cell membrane. Intracellular transport protein that binds sterols and phospholipids and mediates lipid transport between intracellular compartments. Increases plasma membrane cholesterol levels and decreases phosphatidylinositol-4,5-bisphosphate levels in the cell membrane. Binds phosphoinositides, such as phosphatidylinositol-4,5-bisphosphate. Exhibits strong binding to phosphatidic acid and weak binding to phosphatidylinositol 3-phosphate. Binds cholesterol, dehydroergosterol, 22(R)-hydroxycholesterol and 25-hydroxycholesterol (in vitro). The protein is Oxysterol-binding protein-related protein 2 (OSBPL2) of Homo sapiens (Human).